The primary structure comprises 336 residues: Glycerol-3-phosphate dehydrogenase [NAD(P)+] (336 aa).

W11, R33, and K105 together coordinate NADPH. Sn-glycerol 3-phosphate-binding residues include K105, G141, and S143. A145 serves as a coordination point for NADPH. Sn-glycerol 3-phosphate is bound by residues K196, D249, S259, R260, and N261. The active-site Proton acceptor is the K196. Residue R260 coordinates NADPH. Residues V284 and E286 each contribute to the NADPH site.

Belongs to the NAD-dependent glycerol-3-phosphate dehydrogenase family.

It is found in the cytoplasm. The catalysed reaction is sn-glycerol 3-phosphate + NAD(+) = dihydroxyacetone phosphate + NADH + H(+). The enzyme catalyses sn-glycerol 3-phosphate + NADP(+) = dihydroxyacetone phosphate + NADPH + H(+). The protein operates within membrane lipid metabolism; glycerophospholipid metabolism. In terms of biological role, catalyzes the reduction of the glycolytic intermediate dihydroxyacetone phosphate (DHAP) to sn-glycerol 3-phosphate (G3P), the key precursor for phospholipid synthesis. The protein is Glycerol-3-phosphate dehydrogenase [NAD(P)+] of Delftia acidovorans (strain DSM 14801 / SPH-1).